We begin with the raw amino-acid sequence, 74 residues long: U2-sicaritoxin-Sdo1a (74 aa).

The N-terminal stretch at 1 to 20 (MKLSFCFFLCAIVLFSFAEA) is a signal peptide. The propeptide occupies 21-39 (RINPNQLKRLRELVRDDEP). Cystine bridges form between C42/C59, C49/C62, and C58/C71.

In terms of tissue distribution, expressed by the venom gland.

It is found in the secreted. The polypeptide is U2-sicaritoxin-Sdo1a (Hexophthalma dolichocephala (Afrotropical spider)).